The primary structure comprises 122 residues: NADH-quinone oxidoreductase subunit A (122 aa).

3 consecutive transmembrane segments (helical) span residues 10-30 (MIVL…LTLG), 66-86 (IFAL…PWAV), and 91-111 (LGLF…VGLA).

The protein belongs to the complex I subunit 3 family. NDH-1 is composed of 14 different subunits. Subunits NuoA, H, J, K, L, M, N constitute the membrane sector of the complex.

It is found in the cell membrane. The catalysed reaction is a quinone + NADH + 5 H(+)(in) = a quinol + NAD(+) + 4 H(+)(out). Its function is as follows. NDH-1 shuttles electrons from NADH, via FMN and iron-sulfur (Fe-S) centers, to quinones in the respiratory chain. The immediate electron acceptor for the enzyme in this species is believed to be a menaquinone. Couples the redox reaction to proton translocation (for every two electrons transferred, four hydrogen ions are translocated across the cytoplasmic membrane), and thus conserves the redox energy in a proton gradient. This Bacillus anthracis protein is NADH-quinone oxidoreductase subunit A.